A 505-amino-acid polypeptide reads, in one-letter code: Lysine--tRNA ligase (505 aa).

2 residues coordinate Mg(2+): glutamate 415 and glutamate 422.

The protein belongs to the class-II aminoacyl-tRNA synthetase family. In terms of assembly, homodimer. It depends on Mg(2+) as a cofactor.

It is found in the cytoplasm. It carries out the reaction tRNA(Lys) + L-lysine + ATP = L-lysyl-tRNA(Lys) + AMP + diphosphate. This is Lysine--tRNA ligase from Yersinia pseudotuberculosis serotype O:1b (strain IP 31758).